The following is a 397-amino-acid chain: Formate-dependent phosphoribosylglycinamide formyltransferase (397 aa).

N(1)-(5-phospho-beta-D-ribosyl)glycinamide contacts are provided by residues 21–22 and E81; that span reads EL. Residues R113, K154, 194 to 197, and E202 contribute to the ATP site; that span reads EEYV. An ATP-grasp domain is found at 118–313; that stretch reads KLAAEKVKVP…EFQIHVRSAL (196 aa). Residues E272 and E284 each coordinate Mg(2+). N(1)-(5-phospho-beta-D-ribosyl)glycinamide-binding positions include D291, K361, and 368–369; that span reads RR.

This sequence belongs to the PurK/PurT family. As to quaternary structure, homodimer.

It carries out the reaction N(1)-(5-phospho-beta-D-ribosyl)glycinamide + formate + ATP = N(2)-formyl-N(1)-(5-phospho-beta-D-ribosyl)glycinamide + ADP + phosphate + H(+). It functions in the pathway purine metabolism; IMP biosynthesis via de novo pathway; N(2)-formyl-N(1)-(5-phospho-D-ribosyl)glycinamide from N(1)-(5-phospho-D-ribosyl)glycinamide (formate route): step 1/1. Involved in the de novo purine biosynthesis. Catalyzes the transfer of formate to 5-phospho-ribosyl-glycinamide (GAR), producing 5-phospho-ribosyl-N-formylglycinamide (FGAR). Formate is provided by PurU via hydrolysis of 10-formyl-tetrahydrofolate. The sequence is that of Formate-dependent phosphoribosylglycinamide formyltransferase from Sulfurisphaera tokodaii (strain DSM 16993 / JCM 10545 / NBRC 100140 / 7) (Sulfolobus tokodaii).